The sequence spans 261 residues: Flagellar L-ring protein (261 aa).

Residues 1 to 15 (MKRLLCLLLLTTLTG) form the signal peptide. Cys-16 carries the N-palmitoyl cysteine lipid modification. Residue Cys-16 is the site of S-diacylglycerol cysteine attachment. Basic and acidic residues predominate over residues 121-133 (KSADAELSKKNDS). The tract at residues 121 to 140 (KSADAELSKKNDSSMDPLQV) is disordered.

It belongs to the FlgH family. In terms of assembly, the basal body constitutes a major portion of the flagellar organelle and consists of four rings (L,P,S, and M) mounted on a central rod.

The protein resides in the cell outer membrane. It localises to the bacterial flagellum basal body. Functionally, assembles around the rod to form the L-ring and probably protects the motor/basal body from shearing forces during rotation. This chain is Flagellar L-ring protein, found in Aliivibrio salmonicida (strain LFI1238) (Vibrio salmonicida (strain LFI1238)).